The following is a 332-amino-acid chain: Ribosomal RNA small subunit methyltransferase H (332 aa).

Residues 38 to 40 (GGY), D56, F83, D104, and Q111 each bind S-adenosyl-L-methionine. Positions 309-332 (TETPFSEDISRPDTHIPRSRRQSA) are disordered.

It belongs to the methyltransferase superfamily. RsmH family.

The protein localises to the cytoplasm. The enzyme catalyses cytidine(1402) in 16S rRNA + S-adenosyl-L-methionine = N(4)-methylcytidine(1402) in 16S rRNA + S-adenosyl-L-homocysteine + H(+). Its function is as follows. Specifically methylates the N4 position of cytidine in position 1402 (C1402) of 16S rRNA. The protein is Ribosomal RNA small subunit methyltransferase H of Zymomonas mobilis subsp. mobilis (strain ATCC 31821 / ZM4 / CP4).